The primary structure comprises 340 residues: N(4)-(Beta-N-acetylglucosaminyl)-L-asparaginase (340 aa).

The signal sequence occupies residues 1-45 (MRIIYKQQTMNNNRRDFIKKLGIATAAIAINPLEAKNLLDTSEPK). Thr-197 functions as the Nucleophile in the catalytic mechanism. Substrate-binding positions include 225–228 (RVGD) and 248–251 (TGHG).

This sequence belongs to the Ntn-hydrolase family. In terms of assembly, heterotetramer of two alpha and two beta chains arranged as a dimer of alpha/beta heterodimers. Post-translationally, cleaved into an alpha and beta chain by autocatalysis; this activates the enzyme. The N-terminal residue of the beta subunit is responsible for the nucleophile hydrolase activity.

It localises to the periplasm. It carries out the reaction N(4)-(beta-N-acetyl-D-glucosaminyl)-L-asparagine + H2O = N-acetyl-beta-D-glucosaminylamine + L-aspartate + H(+). Functionally, cleaves the GlcNAc-Asn bond which joins oligosaccharides to the peptide of asparagine-linked glycoproteins. Requires that the glycosylated asparagine moiety is not substituted on its N-(R1) and C- (R2) terminus. The sequence is that of N(4)-(Beta-N-acetylglucosaminyl)-L-asparaginase from Elizabethkingia miricola (Chryseobacterium miricola).